We begin with the raw amino-acid sequence, 357 residues long: Holliday junction branch migration complex subunit RuvB (357 aa).

The large ATPase domain (RuvB-L) stretch occupies residues 3–193; that stretch reads WDDTTDAEAA…FGFTAHMEFY (191 aa). Residues Leu32, Arg33, Gly74, Lys77, Thr78, Thr79, 140–142, Arg183, Tyr193, and Arg230 contribute to the ATP site; that span reads EDF. Thr78 contacts Mg(2+). The tract at residues 194–264 is small ATPAse domain (RuvB-S); sequence GPAELERVIH…IAAAALAVYE (71 aa). The interval 267 to 357 is head domain (RuvB-H); that stretch reads ARGLDRLDRG…GNGQPDLFGA (91 aa). DNA contacts are provided by Arg303, Arg322, and Arg327. Residues 337–357 are disordered; that stretch reads LGLTPPRPQSSGNGQPDLFGA.

The protein belongs to the RuvB family. In terms of assembly, homohexamer. Forms an RuvA(8)-RuvB(12)-Holliday junction (HJ) complex. HJ DNA is sandwiched between 2 RuvA tetramers; dsDNA enters through RuvA and exits via RuvB. An RuvB hexamer assembles on each DNA strand where it exits the tetramer. Each RuvB hexamer is contacted by two RuvA subunits (via domain III) on 2 adjacent RuvB subunits; this complex drives branch migration. In the full resolvosome a probable DNA-RuvA(4)-RuvB(12)-RuvC(2) complex forms which resolves the HJ.

It is found in the cytoplasm. The enzyme catalyses ATP + H2O = ADP + phosphate + H(+). In terms of biological role, the RuvA-RuvB-RuvC complex processes Holliday junction (HJ) DNA during genetic recombination and DNA repair, while the RuvA-RuvB complex plays an important role in the rescue of blocked DNA replication forks via replication fork reversal (RFR). RuvA specifically binds to HJ cruciform DNA, conferring on it an open structure. The RuvB hexamer acts as an ATP-dependent pump, pulling dsDNA into and through the RuvAB complex. RuvB forms 2 homohexamers on either side of HJ DNA bound by 1 or 2 RuvA tetramers; 4 subunits per hexamer contact DNA at a time. Coordinated motions by a converter formed by DNA-disengaged RuvB subunits stimulates ATP hydrolysis and nucleotide exchange. Immobilization of the converter enables RuvB to convert the ATP-contained energy into a lever motion, pulling 2 nucleotides of DNA out of the RuvA tetramer per ATP hydrolyzed, thus driving DNA branch migration. The RuvB motors rotate together with the DNA substrate, which together with the progressing nucleotide cycle form the mechanistic basis for DNA recombination by continuous HJ branch migration. Branch migration allows RuvC to scan DNA until it finds its consensus sequence, where it cleaves and resolves cruciform DNA. This Streptomyces coelicolor (strain ATCC BAA-471 / A3(2) / M145) protein is Holliday junction branch migration complex subunit RuvB.